The sequence spans 135 residues: Sex-regulated protein janus-A (135 aa).

Residue lysine 37 participates in substrate binding. Histidine 63 (proton acceptor) is an active-site residue. 104 to 106 contacts substrate; sequence SQG.

The protein belongs to the janus family.

Its function is as follows. JanA and janB regulate somatic sex differentiation. This is Sex-regulated protein janus-A (janA) from Drosophila orena (Fruit fly).